A 486-amino-acid chain; its full sequence is ATP synthase subunit beta (486 aa).

Position 164–171 (164–171 (GGAGVGKT)) interacts with ATP.

Belongs to the ATPase alpha/beta chains family. In terms of assembly, F-type ATPases have 2 components, CF(1) - the catalytic core - and CF(0) - the membrane proton channel. CF(1) has five subunits: alpha(3), beta(3), gamma(1), delta(1), epsilon(1). CF(0) has four main subunits: a(1), b(1), b'(1) and c(9-12).

The protein localises to the cellular thylakoid membrane. It catalyses the reaction ATP + H2O + 4 H(+)(in) = ADP + phosphate + 5 H(+)(out). Produces ATP from ADP in the presence of a proton gradient across the membrane. The catalytic sites are hosted primarily by the beta subunits. The protein is ATP synthase subunit beta of Prochlorococcus marinus (strain MIT 9215).